Consider the following 102-residue polypeptide: Small ribosomal subunit protein uS10 (102 aa).

Belongs to the universal ribosomal protein uS10 family. In terms of assembly, part of the 30S ribosomal subunit.

Its function is as follows. Involved in the binding of tRNA to the ribosomes. This chain is Small ribosomal subunit protein uS10, found in Streptococcus pyogenes serotype M12 (strain MGAS2096).